Here is a 141-residue protein sequence, read N- to C-terminus: Hemoglobin D subunit alpha (141 aa).

Positions 1 to 141 (MLTEDDKQLI…VSAVLAEKYR (141 aa)) constitute a Globin domain. O2 is bound at residue histidine 58. Histidine 87 serves as a coordination point for heme b.

It belongs to the globin family. In terms of assembly, tetramer of two alpha chains and two beta chains. Red blood cells.

Functionally, involved in oxygen transport from the lung to the various peripheral tissues. The protein is Hemoglobin D subunit alpha of Aldabrachelys gigantea (Aldabra giant tortoise).